We begin with the raw amino-acid sequence, 447 residues long: Signal recognition particle 54 kDa protein (447 aa).

GTP is bound by residues glycine 103–threonine 110, aspartate 185–arginine 189, and threonine 245–aspartate 248.

This sequence belongs to the GTP-binding SRP family. SRP54 subfamily. As to quaternary structure, part of the signal recognition particle protein translocation system, which is composed of SRP and FtsY. Archaeal SRP consists of a 7S RNA molecule of 300 nucleotides and two protein subunits: SRP54 and SRP19.

It is found in the cytoplasm. The enzyme catalyses GTP + H2O = GDP + phosphate + H(+). Involved in targeting and insertion of nascent membrane proteins into the cytoplasmic membrane. Binds to the hydrophobic signal sequence of the ribosome-nascent chain (RNC) as it emerges from the ribosomes. The SRP-RNC complex is then targeted to the cytoplasmic membrane where it interacts with the SRP receptor FtsY. This Saccharolobus islandicus (strain Y.N.15.51 / Yellowstone #2) (Sulfolobus islandicus) protein is Signal recognition particle 54 kDa protein.